The following is a 213-amino-acid chain: ER lumen protein-retaining receptor erd-2.1 (213 aa).

The Lumenal segment spans residues 1–2 (MN). The helical transmembrane segment at 3-21 (LFRFTADVAHAIAIVVLLL) threads the bilayer. Residues 22–35 (KIWKSRSCEGISGR) lie on the Cytoplasmic side of the membrane. The chain crosses the membrane as a helical span at residues 36–53 (SQLLFALVFVTRYLDLFT). The Lumenal portion of the chain corresponds to 54–61 (NFFSFYNT). A helical transmembrane segment spans residues 62–80 (AMKIFYLVASFGTVYLMWA). The Cytoplasmic segment spans residues 81-96 (KFKATYDRNNDSFRIE). Residues 97–110 (FLVIPSMILALLIN) form a helical membrane-spanning segment. The Lumenal portion of the chain corresponds to 111-117 (HEFIFME). A helical membrane pass occupies residues 118-137 (VMWTFSIYLEAVAIMPQLFM). Residues 138–149 (LSRTGNAETITA) are Cytoplasmic-facing. A helical transmembrane segment spans residues 150-168 (HYLFALGSYRFLYILNWVY). Over 169–178 (RYYTESFFDP) the chain is Lumenal. The chain crosses the membrane as a helical span at residues 179 to 199 (ISVVAGIVQTVLYADFFYLYI). The Cytoplasmic portion of the chain corresponds to 200–213 (TRVIQSNRQFEMSA).

Belongs to the ERD2 family.

Its subcellular location is the endoplasmic reticulum membrane. Functionally, required for the retention of luminal endoplasmic reticulum proteins. Determines the specificity of the luminal ER protein retention system. Also required for normal vesicular traffic through the Golgi. The polypeptide is ER lumen protein-retaining receptor erd-2.1 (Caenorhabditis elegans).